Reading from the N-terminus, the 929-residue chain is Band 4.1-like protein 3 (929 aa).

Met1 is modified (N-acetylmethionine). The interval 1–72 is disordered; that stretch reads MTTESGSDSE…STPVKREIGD (72 aa). Position 2 is an N-acetylthreonine; in Band 4.1-like protein 3, N-terminally processed (Thr2). A compositionally biased stretch (low complexity) spans 20-33; the sequence is QEAAGPQGQAGAQP. Ser96 carries the post-translational modification Phosphoserine. The FERM domain maps to 118 to 399; the sequence is MQCKVTLLDG…EHHTFFRLLL (282 aa). The segment at 402-528 is hydrophilic; the sequence is APPKKFLTLG…PVTALRHEGK (127 aa). Residues Ser428, Ser451, and Ser486 each carry the phosphoserine modification. The tract at residues 490–554 is disordered; the sequence is LITTVTPEKK…TESDQEEDAE (65 aa). A Phosphothreonine modification is found at Thr495. Basic and acidic residues predominate over residues 496-516; sequence PEKKAEEERVEEEDRRKKAEE. Thr518 is modified (phosphothreonine). Residues 523–536 are compositionally biased toward basic and acidic residues; it reads LRHEGKTDSERTDT. Phosphoserine occurs at positions 525 and 543. The residue at position 545 (Thr545) is a Phosphothreonine. Phosphoserine is present on Ser547. Positions 559-602 are spectrin--actin-binding; it reads DLDKTQDELMKHQTNISELKRTFLETSTETALTNEWEKRLSTSP. Disordered stretches follow at residues 608-630, 665-689, and 705-807; these read RQED…SGEK, LETK…STEK, and VHAS…SPGG. Thr725 bears the Phosphothreonine mark. Residues 726–737 show a composition bias toward basic and acidic residues; the sequence is PTDRRHTGKGKE. The tract at residues 777-929 is C-terminal (CTD); the sequence is RTSEGLEQKS…TEITPEDGED (153 aa). The span at 789-802 shows a compositional bias: low complexity; that stretch reads ESSTVRVESTSVGS. Phosphoserine is present on residues Ser802 and Ser804. Position 923 is a phosphothreonine (Thr923).

In terms of assembly, interacts (via FERM domain) with CADM1. Interacts (via FERM domain) with PRMT3; the interaction is direct and inhibits the protein-arginine N-methyltransferase activity of PRMT3. Interacts with PRMT5. Interacts with PRMT6. Has the complete spectrin--actin-binding (SAB) domain and fully interacts with spectrin and actin. In terms of tissue distribution, detected in brain (at protein level). Highest expression in brain, lower in testis, adrenal gland, heart and kidney. Also present in muscle and epithelial cells. Isoform 1 is expressed in brain, isoform 2 is expressed in heart and isoform 3 is mostly expressed in kidney but also in heart and brain. Isoform 6 seems to be most abundant in kidney while isoform 4 and isoform 5 are predominantly expressed in heart and brain.

It localises to the cytoplasm. The protein resides in the cytoskeleton. The protein localises to the cell membrane. It is found in the cell junction. Tumor suppressor that inhibits cell proliferation and promotes apoptosis. Modulates the activity of protein arginine N-methyltransferases, including PRMT3 and PRMT5. The polypeptide is Band 4.1-like protein 3 (Mus musculus (Mouse)).